The following is a 223-amino-acid chain: Putative UPF0607 protein LOC392364 (223 aa).

A compositionally biased stretch (basic and acidic residues) spans 110 to 138; it reads KMEVRAEEPKEATEVKDQVETQEQEDNKR. Residues 110–223 form a disordered region; sequence KMEVRAEEPK…GRTPPARQHG (114 aa). Polar residues-rich tracts occupy residues 145 to 163 and 174 to 186; these read EAAS…TSPR and QLKS…QTDK.

The protein belongs to the UPF0607 family.

The chain is Putative UPF0607 protein LOC392364 from Homo sapiens (Human).